We begin with the raw amino-acid sequence, 234 residues long: Purine nucleoside phosphorylase DeoD-type (234 aa).

An a purine D-ribonucleoside-binding site is contributed by H4. Phosphate contacts are provided by residues G20, R24, R43, and R87–T90. Residues E179 to E181 and S203 to D204 contribute to the a purine D-ribonucleoside site. Catalysis depends on D204, which acts as the Proton donor.

The protein belongs to the PNP/UDP phosphorylase family. As to quaternary structure, homohexamer; trimer of homodimers.

The catalysed reaction is a purine D-ribonucleoside + phosphate = a purine nucleobase + alpha-D-ribose 1-phosphate. It carries out the reaction a purine 2'-deoxy-D-ribonucleoside + phosphate = a purine nucleobase + 2-deoxy-alpha-D-ribose 1-phosphate. Its function is as follows. Catalyzes the reversible phosphorolytic breakdown of the N-glycosidic bond in the beta-(deoxy)ribonucleoside molecules, with the formation of the corresponding free purine bases and pentose-1-phosphate. This Helicobacter pylori (strain Shi470) protein is Purine nucleoside phosphorylase DeoD-type.